Consider the following 417-residue polypeptide: Serine/threonine-protein kinase SBK1 (417 aa).

The 266-residue stretch at 53 to 318 folds into the Protein kinase domain; sequence YELVRELGKG…VFRFLKHELT (266 aa). Residues 59 to 67 and Lys-82 contribute to the ATP site; that span reads LGKGTYGKV. The Proton acceptor role is filled by Asp-174. The disordered stretch occupies residues 321 to 405; sequence LRRRPSHRAR…TDGRTDKSKG (85 aa). Pro residues predominate over residues 363-382; sequence PSPPSVGPVVPVPVPVPVPV.

Belongs to the protein kinase superfamily. Ser/Thr protein kinase family.

It is found in the cytoplasm. The enzyme catalyses L-seryl-[protein] + ATP = O-phospho-L-seryl-[protein] + ADP + H(+). It catalyses the reaction L-threonyl-[protein] + ATP = O-phospho-L-threonyl-[protein] + ADP + H(+). Functionally, may be involved in signal-transduction pathways related to the control of brain development. The polypeptide is Serine/threonine-protein kinase SBK1 (Sbk1) (Mus musculus (Mouse)).